The following is a 184-amino-acid chain: dCTP deaminase (184 aa).

DCTP-binding positions include 107 to 112 (KSTYAR), 131 to 133 (TLE), Q152, Y166, and Q176. E133 serves as the catalytic Proton donor/acceptor.

It belongs to the dCTP deaminase family. Homotrimer.

It carries out the reaction dCTP + H2O + H(+) = dUTP + NH4(+). It participates in pyrimidine metabolism; dUMP biosynthesis; dUMP from dCTP (dUTP route): step 1/2. Its function is as follows. Catalyzes the deamination of dCTP to dUTP. This Rhodospirillum centenum (strain ATCC 51521 / SW) protein is dCTP deaminase.